We begin with the raw amino-acid sequence, 340 residues long: PRKC apoptosis WT1 regulator protein (340 aa).

The segment covering 1 to 18 (MATGGYRTSSGLGGSTTD) has biased composition (polar residues). Positions 1-253 (MATGGYRTSS…TDRSGFPRYN (253 aa)) are disordered. Over residues 47-82 (SDAAGKPPAGALGTPAAAAANELNNNLPGGAPAAPA) the composition is skewed to low complexity. Residues 68 to 72 (ELNNN) carry the B30.2/SPRY domain-binding motif motif. The residue at position 108 (serine 108) is a Phosphoserine. Residues 145 to 161 (RKGKGQIEKRKLREKRR) carry the Nuclear localization signal motif. The interval 145–203 (RKGKGQIEKRKLREKRRSTGVVNIPAAECLDEYEDDEAGQKERKREDAITQQNTIQNEA) is selective for apoptosis induction in cancer cells (SAC). Phosphothreonine; by PKA is present on threonine 163. The span at 182 to 192 (AGQKERKREDA) shows a compositional bias: basic and acidic residues. The stretch at 186–206 (ERKREDAITQQNTIQNEAVNL) forms a coiled coil. The span at 193–203 (ITQQNTIQNEA) shows a compositional bias: polar residues. A Phosphoserine modification is found at serine 231. Basic and acidic residues predominate over residues 242 to 253 (SRTDRSGFPRYN). The interval 300-340 (IGKLKEEIDLLNRDLDDIEDENEQLKQENKTLLKVVGQLTR) is leucine-zipper.

Homooligomer. Interacts (via the C-terminal region) with WT1. Interacts with THAP1. Interacts with AATF. Interacts with BACE1. Interacts with SPSB1 (via B30.2/SPRY domain); this interaction is direct and occurs in association with the Elongin BC complex. Interacts with SPSB2 (via B30.2/SPRY domain); this interaction occurs in association with the Elongin BC complex. Interacts with SPSB4 (via B30.2/SPRY domain); this interaction occurs in association with the Elongin BC complex. Component of a ternary complex composed of SQSTM1 and PRKCZ. Interacts with actin. In terms of processing, preferentially phosphorylated at the Thr-163 by PKC in cancer cells. As to expression, widely expressed. Expression is elevated in various neurodegenerative diseases such as amyotrophic lateral sclerosis, Alzheimer, Parkinson and Huntington diseases and stroke. Down-regulated in several cancers.

It is found in the cytoplasm. Its subcellular location is the nucleus. Pro-apoptotic protein capable of selectively inducing apoptosis in cancer cells, sensitizing the cells to diverse apoptotic stimuli and causing regression of tumors in animal models. Induces apoptosis in certain cancer cells by activation of the Fas prodeath pathway and coparallel inhibition of NF-kappa-B transcriptional activity. Inhibits the transcriptional activation and augments the transcriptional repression mediated by WT1. Down-regulates the anti-apoptotic protein BCL2 via its interaction with WT1. Also seems to be a transcriptional repressor by itself. May be directly involved in regulating the amyloid precursor protein (APP) cleavage activity of BACE1. This is PRKC apoptosis WT1 regulator protein (PAWR) from Homo sapiens (Human).